Here is a 221-residue protein sequence, read N- to C-terminus: Ribosomal RNA small subunit methyltransferase G (221 aa).

Residues Gly83, Phe88, 132–133, and Arg146 each bind S-adenosyl-L-methionine; that span reads LE.

It belongs to the methyltransferase superfamily. RNA methyltransferase RsmG family.

The protein resides in the cytoplasm. The catalysed reaction is guanosine(527) in 16S rRNA + S-adenosyl-L-methionine = N(7)-methylguanosine(527) in 16S rRNA + S-adenosyl-L-homocysteine. Its function is as follows. Specifically methylates the N7 position of guanine in position 527 of 16S rRNA. In Zymomonas mobilis subsp. mobilis (strain ATCC 31821 / ZM4 / CP4), this protein is Ribosomal RNA small subunit methyltransferase G.